The primary structure comprises 717 residues: Delta-like protein D (717 aa).

The N-terminal stretch at 1–19 is a signal peptide; that stretch reads MGRLMIAVLLCVMISQGFC. Residues 20-547 lie on the Extracellular side of the membrane; the sequence is SGVFELKLQE…EEDDGGFPWT (528 aa). Residues 175 to 219 enclose the DSL domain; that stretch reads FVCDEHYYGEGCSVFCRPRDDTFGHFTCGERGEIICNSGWKGQYC. 26 cysteine pairs are disulfide-bonded: Cys-177–Cys-186, Cys-190–Cys-202, Cys-210–Cys-219, Cys-224–Cys-235, Cys-228–Cys-241, Cys-243–Cys-252, Cys-261–Cys-266, Cys-274–Cys-283, Cys-290–Cys-302, Cys-296–Cys-312, Cys-314–Cys-323, Cys-330–Cys-341, Cys-335–Cys-350, Cys-352–Cys-361, Cys-368–Cys-379, Cys-373–Cys-389, Cys-391–Cys-400, Cys-407–Cys-418, Cys-412–Cys-427, Cys-429–Cys-438, Cys-445–Cys-456, Cys-450–Cys-465, Cys-467–Cys-476, Cys-483–Cys-494, Cys-488–Cys-503, and Cys-505–Cys-514. 3 consecutive EGF-like domains span residues 220–253, 257–284, and 286–324; these read TEPI…KYCD, RYPG…LFCN, and DLNY…DSCE. Residues 326–362 enclose the EGF-like 4; calcium-binding domain; the sequence is EVNECSGSPCRNGGSCTDLENTYSCTCPPGFYGRNCE. 2 consecutive EGF-like domains span residues 364-401 and 403-439; these read SAMT…FNCE and KIDH…THCE. Positions 441 to 477 constitute an EGF-like 7; calcium-binding domain; sequence NIDECATYPCQNGGTCQDGLSDYTCTCPPGYTGKNCT. N-linked (GlcNAc...) asparagine glycosylation is present at Asn-475. An EGF-like 8 domain is found at 479 to 515; that stretch reads AVNKCLHNPCHNGATCHEMDNRYVCACIPGYGGRNCQ. The chain crosses the membrane as a helical span at residues 548 to 568; sequence AVCAGIILVLLVLIGGSVFVI. Over 569–717 the chain is Cytoplasmic; sequence YIRLKLQQRS…KDECIIATEV (149 aa). The tract at residues 649 to 693 is disordered; the sequence is EDLGKEDSERSEATKCEPLDSDSEEKHRNHLKSDSSERKRTESLC.

In terms of assembly, interacts with mib. Ubiquitinated by mib, leading to its endocytosis and subsequent degradation. In terms of tissue distribution, expressed in both mesodermal and neuroectodermal regions. In the developing nervous system, it is expressed in overlapping regions with deltaB (dlb) and deltaA (dla); in the neural plate, dld is expressed in patches of contiguous cells with dla, while dlb is confined to scattered cells within those patches that will differentiate as neurons. In somites, it marks the anterior part of each formed somite, while deltaC (dlc) marks the posterior part. In 24 hours embryos, expressed in the hindbrain in stripes adjacent to rhombomere boundaries, but not in the actual boundary cells.

The protein localises to the membrane. In terms of biological role, acts as a ligand for Notch receptors and is involved in primary neurogenesis and somitogenesis. Can activate Notch receptors, thereby playing a key role in lateral inhibition, a process that prevents the immediate neighbors of each nascent neural cell from simultaneously embarking on neural differentiation. Required in somite segmentation to keep the oscillations of neighboring presomitic mesoderm cells synchronized. The sequence is that of Delta-like protein D (dld) from Danio rerio (Zebrafish).